The sequence spans 354 residues: Transcription termination factor 3, mitochondrial (354 aa).

Residues 1–89 constitute a mitochondrion transit peptide; it reads MFCSALRNIL…SFNLAAYVNN (89 aa).

Belongs to the mTERF family.

Its subcellular location is the mitochondrion. Functionally, binds promoter DNA and regulates initiation of transcription. Regulator of mitochondrial ribosome biogenesis and translation that is essential for development. Required for normal mitochondrial transcription and translation. Required for assembly of mitochondrial respiratory complexes and normal mitochondrial function. Maintains 16S rRNA levels and functions in mitochondrial ribosome assembly by regulating the biogenesis of the 39S ribosomal subunit. This Drosophila melanogaster (Fruit fly) protein is Transcription termination factor 3, mitochondrial.